The sequence spans 263 residues: Hydroxyacylglutathione hydrolase (263 aa).

Zn(2+) contacts are provided by His55, His57, Asp59, His60, His117, Asp134, and His172.

This sequence belongs to the metallo-beta-lactamase superfamily. Glyoxalase II family. As to quaternary structure, monomer. Requires Zn(2+) as cofactor.

The catalysed reaction is an S-(2-hydroxyacyl)glutathione + H2O = a 2-hydroxy carboxylate + glutathione + H(+). Its pathway is secondary metabolite metabolism; methylglyoxal degradation; (R)-lactate from methylglyoxal: step 2/2. In terms of biological role, thiolesterase that catalyzes the hydrolysis of S-D-lactoyl-glutathione to form glutathione and D-lactic acid. This is Hydroxyacylglutathione hydrolase from Shewanella baltica (strain OS185).